A 247-amino-acid chain; its full sequence is UDP-2,3-diacylglucosamine hydrolase (247 aa).

Residues aspartate 8, histidine 10, aspartate 41, asparagine 79, and histidine 115 each coordinate Mn(2+). Substrate is bound at residue 79–80; that stretch reads NH. Residues aspartate 123, lysine 165, lysine 168, and histidine 196 each coordinate substrate. Positions 196 and 198 each coordinate Mn(2+).

Belongs to the LpxH family. Requires Mn(2+) as cofactor.

The protein resides in the cell inner membrane. It catalyses the reaction UDP-2-N,3-O-bis[(3R)-3-hydroxytetradecanoyl]-alpha-D-glucosamine + H2O = 2-N,3-O-bis[(3R)-3-hydroxytetradecanoyl]-alpha-D-glucosaminyl 1-phosphate + UMP + 2 H(+). It participates in glycolipid biosynthesis; lipid IV(A) biosynthesis; lipid IV(A) from (3R)-3-hydroxytetradecanoyl-[acyl-carrier-protein] and UDP-N-acetyl-alpha-D-glucosamine: step 4/6. Hydrolyzes the pyrophosphate bond of UDP-2,3-diacylglucosamine to yield 2,3-diacylglucosamine 1-phosphate (lipid X) and UMP by catalyzing the attack of water at the alpha-P atom. Involved in the biosynthesis of lipid A, a phosphorylated glycolipid that anchors the lipopolysaccharide to the outer membrane of the cell. This Blochmanniella floridana protein is UDP-2,3-diacylglucosamine hydrolase.